A 310-amino-acid polypeptide reads, in one-letter code: 300 kDa antigen AG231 (310 aa).

Positions 1–23 (VTGSCVVTGSCVVTDSCVVTGSC) are 4 X 6 AA tandem repeats of V-V-T-G-S-C. Positions 29 to 106 (VTTQESVTTQ…TQEPVTVEEH (78 aa)) are 13 X 6 AA tandem repeats of V-V-[TI]-[QE]-E-[PH]. Positions 53–101 (VTIEEPVTTQEPVTIEEPVTTQEPVTTQEPVTTQEPVTTQEPVTTQEPV) are enriched in low complexity. The segment at 53-310 (VTIEEPVTTQ…FGRGNKNDKK (258 aa)) is disordered. Composition is skewed to basic and acidic residues over residues 103–114 (VEEHIDEKKGSE) and 147–160 (NKND…KKPS). Residues 107–152 (IDEKKGSEGDNISLSSLSEETEEKSHTKKKKSSWLKFGRGNKNDKK) form a 45 AA repeat 1 repeat. Residues 176–190 (TDSQISVNAQDSVTI) are compositionally biased toward polar residues. Residues 188–265 (VTIQEPTATQ…TQEPSTTQEH (78 aa)) form a 13 X 6 AA approximate tandem repeats region. Positions 191 to 235 (QEPTATQEPPTTQELTATQEPTTTQETVTEQEPTTTQETVTAQEP) are enriched in low complexity. Residues 236-263 (ITTQEPVTAQEPVTTQELIATQEPSTTQ) are compositionally biased toward polar residues. The segment covering 264-273 (EHADEKKASE) has biased composition (basic and acidic residues). The 45 AA repeat 2 repeat unit spans residues 266 to 310 (ADEKKASEGDNISLSRLSEETEEKSHTKKKSSWLKFGRGNKNDKK).

This is 300 kDa antigen AG231 (FIRA) from Plasmodium falciparum (isolate FC27 / Papua New Guinea).